A 520-amino-acid polypeptide reads, in one-letter code: 2-isopropylmalate synthase (520 aa).

The Pyruvate carboxyltransferase domain occupies 4–266 (VEFLDTTLRD…TSDIVLNETV (263 aa)). Residues D13, H201, H203, and N237 each contribute to the Mn(2+) site. The interval 390-520 (HFGDLKLTSN…AVSFRDVPTN (131 aa)) is regulatory domain.

It belongs to the alpha-IPM synthase/homocitrate synthase family. LeuA type 1 subfamily. As to quaternary structure, homodimer. Requires Mn(2+) as cofactor.

It localises to the cytoplasm. It catalyses the reaction 3-methyl-2-oxobutanoate + acetyl-CoA + H2O = (2S)-2-isopropylmalate + CoA + H(+). Its pathway is amino-acid biosynthesis; L-leucine biosynthesis; L-leucine from 3-methyl-2-oxobutanoate: step 1/4. Functionally, catalyzes the condensation of the acetyl group of acetyl-CoA with 3-methyl-2-oxobutanoate (2-ketoisovalerate) to form 3-carboxy-3-hydroxy-4-methylpentanoate (2-isopropylmalate). This chain is 2-isopropylmalate synthase, found in Streptococcus gallolyticus (strain UCN34).